Here is a 557-residue protein sequence, read N- to C-terminus: Urocanate hydratase (557 aa).

The tract at residues 1-20 (MSNPRHNEREVRSPRGDELN) is disordered. NAD(+) is bound by residues 52–53 (GG), glutamine 130, 176–178 (GMG), glutamate 196, arginine 201, 242–243 (NA), 263–267 (QTSAH), 273–274 (YL), and tyrosine 322. Cysteine 410 is an active-site residue. NAD(+) is bound at residue glycine 492.

The protein belongs to the urocanase family. NAD(+) serves as cofactor.

It is found in the cytoplasm. The enzyme catalyses 4-imidazolone-5-propanoate = trans-urocanate + H2O. It functions in the pathway amino-acid degradation; L-histidine degradation into L-glutamate; N-formimidoyl-L-glutamate from L-histidine: step 2/3. Catalyzes the conversion of urocanate to 4-imidazolone-5-propionate. This is Urocanate hydratase from Brucella melitensis biotype 1 (strain ATCC 23456 / CCUG 17765 / NCTC 10094 / 16M).